A 255-amino-acid chain; its full sequence is 5'-nucleotidase SurE (255 aa).

A divalent metal cation contacts are provided by Asp8, Asp9, Ser40, and Asn95.

It belongs to the SurE nucleotidase family. A divalent metal cation serves as cofactor.

The protein resides in the cytoplasm. It catalyses the reaction a ribonucleoside 5'-phosphate + H2O = a ribonucleoside + phosphate. Nucleotidase that shows phosphatase activity on nucleoside 5'-monophosphates. The chain is 5'-nucleotidase SurE from Solidesulfovibrio magneticus (strain ATCC 700980 / DSM 13731 / RS-1) (Desulfovibrio magneticus).